We begin with the raw amino-acid sequence, 212 residues long: Telomere repeats-binding bouquet formation protein 2 (212 aa).

It belongs to the TERB2 family. As to quaternary structure, component of the MAJIN-TERB1-TERB2 complex.

Meiosis-specific telomere-associated protein involved in meiotic telomere attachment to the nucleus inner membrane, a crucial step for homologous pairing and synapsis. Component of the MAJIN-TERB1-TERB2 complex, which promotes telomere cap exchange by mediating attachment of telomeric DNA to the inner nuclear membrane and replacement of the protective cap of telomeric chromosomes: in early meiosis, the MAJIN-TERB1-TERB2 complex associates with telomeric DNA and the shelterin/telosome complex. During prophase, the complex matures and promotes release of the shelterin/telosome complex from telomeric DNA. The polypeptide is Telomere repeats-binding bouquet formation protein 2 (Danio rerio (Zebrafish)).